Consider the following 218-residue polypeptide: GTP cyclohydrolase 1 (218 aa).

3 residues coordinate Zn(2+): cysteine 109, histidine 112, and cysteine 180.

Belongs to the GTP cyclohydrolase I family. Toroid-shaped homodecamer, composed of two pentamers of five dimers.

The enzyme catalyses GTP + H2O = 7,8-dihydroneopterin 3'-triphosphate + formate + H(+). Its pathway is cofactor biosynthesis; 7,8-dihydroneopterin triphosphate biosynthesis; 7,8-dihydroneopterin triphosphate from GTP: step 1/1. The chain is GTP cyclohydrolase 1 from Haemophilus ducreyi (strain 35000HP / ATCC 700724).